The following is a 1104-amino-acid chain: Inhibitory regulator protein BUD2/CLA2 (1104 aa).

Serine 2 is modified (N-acetylserine). The region spanning 316–444 (RSEYLSITGS…RYNKETRLPI (129 aa)) is the C2 domain. One can recognise a Ras-GAP domain in the interval 536-753 (AKIDGTVSRI…NDLLDYIDKM (218 aa)). Residue serine 854 is modified to Phosphoserine. The disordered stretch occupies residues 1027-1104 (NPKSSNKTSV…FKKKKETGGS (78 aa)). Polar residues-rich tracts occupy residues 1029–1043 (KSSNKTSVHGTSSEN) and 1052–1069 (LPNSQGKGNLGNRFSPTK). Positions 1090 to 1104 (KLTRWFKKKKETGGS) are enriched in basic residues.

Stimulates the GTPase activity of BUD1/RSR1. Participates in the regulation of bud-site selection. The sequence is that of Inhibitory regulator protein BUD2/CLA2 (BUD2) from Saccharomyces cerevisiae (strain ATCC 204508 / S288c) (Baker's yeast).